A 90-amino-acid polypeptide reads, in one-letter code: Probable Fe(2+)-trafficking protein (90 aa).

Belongs to the Fe(2+)-trafficking protein family.

In terms of biological role, could be a mediator in iron transactions between iron acquisition and iron-requiring processes, such as synthesis and/or repair of Fe-S clusters in biosynthetic enzymes. The chain is Probable Fe(2+)-trafficking protein from Vibrio vulnificus (strain CMCP6).